The following is a 365-amino-acid chain: MTENHYLLLTPGPLTTTKTVKEVMLYDWCTWDVEYNTMVQDVRAKLVSLATKEEEKYTTVLMQGSGTFSVEAVIGSVIPKNGKLLVCTNGAYGKRIVQMAEMLHIDVVVSQTEEWEPTNVVEVEKILQQDKEITHIAIVHCETTTGIINPIVDVCKLGKQYGKVTLVDAMSSFGGIEIDIAELQIDFLISSANKCIQGVPGFGFVIAKRDELLKCKGQARSLSLDLYDQWETMENQNGKWRFTSPTHVVHAFYQALLELEKEGGVKARYNRYDNNQKLLVNRMREIGFKPLVDEKYQSPIITSFIYPEEWFDFEQLYNELKRDGFVIYPGKISKVDTFRIGNIGDVHEADINRLVDSIAKGVVIG.

The residue at position 194 (Lys-194) is an N6-(pyridoxal phosphate)lysine.

This sequence belongs to the class-V pyridoxal-phosphate-dependent aminotransferase family. PhnW subfamily. Homodimer. It depends on pyridoxal 5'-phosphate as a cofactor.

The enzyme catalyses (2-aminoethyl)phosphonate + pyruvate = phosphonoacetaldehyde + L-alanine. Functionally, involved in phosphonate degradation. This chain is 2-aminoethylphosphonate--pyruvate transaminase, found in Bacillus cereus (strain ATCC 10987 / NRS 248).